The primary structure comprises 398 residues: Alpha-monoglucosyldiacylglycerol synthase (398 aa).

This sequence belongs to the glycosyltransferase group 1 family. Glycosyltransferase 4 subfamily. The cofactor is Mg(2+).

The protein localises to the cell membrane. The catalysed reaction is a 1,2-diacyl-sn-glycerol + UDP-alpha-D-glucose = a 1,2-diacyl-3-O-(alpha-D-glucopyranosyl)-sn-glycerol + UDP + H(+). Activated by the negatively charged lipids phosphatidylglycerol (PG), cardiolipin (CL), dodecylphosphate-rac-glycerol (PDG), 1,2-dioleoyl-phosphatidylglycerol (DOPG) and phosphatidylserine (PS). In terms of biological role, glucosyltransferase involved in the biosynthesis of the non-bilayer-prone membrane lipid alpha-monoglucosyldiacylglycerol. This is a major component for maintaining a certain anionic lipid surface charge density, for balancing the bilayer to non-bilayer phase equilibria and for keeping a constant lipid bilayer spontaneous curvature (curvature packing stress). Catalyzes the transfer of a glucosyl residue from UDP-Glc to diacylglycerol (DAG) acceptor to form the corresponding alpha-glucosyl-DAG (1,2-diacyl-3-O-(alpha-D-glucopyranosyl)-sn-glycerol). It can only use UDP-Glc as sugar donor and DAG is the preferred substrate. The sequence is that of Alpha-monoglucosyldiacylglycerol synthase (mgs) from Acholeplasma laidlawii.